The chain runs to 273 residues: Dermonecrotic toxin LhSicTox-alphaIA2bi (273 aa).

Residues Glu25 and Asp27 each contribute to the Mg(2+) site. His41 acts as the Nucleophile in catalysis. Cystine bridges form between Cys45-Cys51 and Cys47-Cys190. Asp85 is a Mg(2+) binding site.

It belongs to the arthropod phospholipase D family. Class II subfamily. It depends on Mg(2+) as a cofactor. In terms of tissue distribution, expressed by the venom gland.

The protein resides in the secreted. The enzyme catalyses an N-(acyl)-sphingosylphosphocholine = an N-(acyl)-sphingosyl-1,3-cyclic phosphate + choline. It catalyses the reaction an N-(acyl)-sphingosylphosphoethanolamine = an N-(acyl)-sphingosyl-1,3-cyclic phosphate + ethanolamine. It carries out the reaction a 1-acyl-sn-glycero-3-phosphocholine = a 1-acyl-sn-glycero-2,3-cyclic phosphate + choline. The catalysed reaction is a 1-acyl-sn-glycero-3-phosphoethanolamine = a 1-acyl-sn-glycero-2,3-cyclic phosphate + ethanolamine. In terms of biological role, dermonecrotic toxins cleave the phosphodiester linkage between the phosphate and headgroup of certain phospholipids (sphingolipid and lysolipid substrates), forming an alcohol (often choline) and a cyclic phosphate. This toxin acts on sphingomyelin (SM). It may also act on ceramide phosphoethanolamine (CPE), lysophosphatidylcholine (LPC) and lysophosphatidylethanolamine (LPE), but not on lysophosphatidylserine (LPS), and lysophosphatidylglycerol (LPG). It acts by transphosphatidylation, releasing exclusively cyclic phosphate products as second products. Induces dermonecrosis, hemolysis, increased vascular permeability, edema, inflammatory response, and platelet aggregation. This is Dermonecrotic toxin LhSicTox-alphaIA2bi from Loxosceles hirsuta (Recluse spider).